Here is a 105-residue protein sequence, read N- to C-terminus: Ferredoxin (105 aa).

Positions 8 and 16 each coordinate [3Fe-4S] cluster. Cys-20, Cys-39, Cys-42, and Cys-45 together coordinate [4Fe-4S] cluster. The 4Fe-4S ferredoxin-type domain occupies 30–59; sequence RSLYIHPDECVDCGACEPVCPVEAIFYEDD. A [3Fe-4S] cluster-binding site is contributed by Cys-49.

[4Fe-4S] cluster is required as a cofactor. The cofactor is [3Fe-4S] cluster.

In terms of biological role, ferredoxins are iron-sulfur proteins that transfer electrons in a wide variety of metabolic reactions. Its function is as follows. Putative electron transport protein for the cytochrome P-450SOY system from the same organism. This Streptomyces griseus protein is Ferredoxin.